Consider the following 65-residue polypeptide: Large ribosomal subunit protein bL35 (65 aa).

Belongs to the bacterial ribosomal protein bL35 family.

The chain is Large ribosomal subunit protein bL35 from Chlorobium phaeovibrioides (strain DSM 265 / 1930) (Prosthecochloris vibrioformis (strain DSM 265)).